The primary structure comprises 167 residues: MGITKEEVNSYYQKAGIVLTDEEVDQIQLMDYGLGKERKVGLQLFVYVNTDRYCSKELVLFPGQTCPEHRHPPVDGQEGKQETFRCRYGKVYLYVEGEKTPLPKVLPPQEDREHYTVWHEIELEPGGQYTIPPNTKHWFQAGEEGAVVTEMSSTSTDKHDIFTDPRI.

Mn(2+) is bound by residues His69, His71, Glu82, and His137.

Belongs to the D-lyxose ketol-isomerase family. In terms of assembly, homodimer. Mn(2+) serves as cofactor.

The catalysed reaction is D-lyxose = D-xylulose. Functionally, sugar isomerase that catalyzes the reversible isomerization of D-lyxose to D-xylulose. This Bacillus subtilis (strain 168) protein is Probable D-lyxose ketol-isomerase (ydaE).